We begin with the raw amino-acid sequence, 586 residues long: A-type ATP synthase subunit A (586 aa).

233-240 (GPFGSGKT) is a binding site for ATP.

The protein belongs to the ATPase alpha/beta chains family. In terms of assembly, has multiple subunits with at least A(3), B(3), C, D, E, F, H, I and proteolipid K(x).

It localises to the cell membrane. The catalysed reaction is ATP + H2O + 4 H(+)(in) = ADP + phosphate + 5 H(+)(out). In terms of biological role, component of the A-type ATP synthase that produces ATP from ADP in the presence of a proton gradient across the membrane. The A chain is the catalytic subunit. The protein is A-type ATP synthase subunit A of Methanococcus aeolicus (strain ATCC BAA-1280 / DSM 17508 / OCM 812 / Nankai-3).